The chain runs to 349 residues: 4-hydroxy-3-methylbut-2-en-1-yl diphosphate synthase (flavodoxin) (349 aa).

[4Fe-4S] cluster contacts are provided by Cys265, Cys268, Cys300, and Glu307.

Belongs to the IspG family. It depends on [4Fe-4S] cluster as a cofactor.

It catalyses the reaction (2E)-4-hydroxy-3-methylbut-2-enyl diphosphate + oxidized [flavodoxin] + H2O + 2 H(+) = 2-C-methyl-D-erythritol 2,4-cyclic diphosphate + reduced [flavodoxin]. It functions in the pathway isoprenoid biosynthesis; isopentenyl diphosphate biosynthesis via DXP pathway; isopentenyl diphosphate from 1-deoxy-D-xylulose 5-phosphate: step 5/6. In terms of biological role, converts 2C-methyl-D-erythritol 2,4-cyclodiphosphate (ME-2,4cPP) into 1-hydroxy-2-methyl-2-(E)-butenyl 4-diphosphate. This Thermodesulfovibrio yellowstonii (strain ATCC 51303 / DSM 11347 / YP87) protein is 4-hydroxy-3-methylbut-2-en-1-yl diphosphate synthase (flavodoxin).